We begin with the raw amino-acid sequence, 142 residues long: Nucleoside diphosphate kinase (142 aa).

The ATP site is built by Lys-11, Phe-59, Arg-87, Thr-93, Arg-104, and Asn-114. The active-site Pros-phosphohistidine intermediate is the His-117.

The protein belongs to the NDK family. It depends on Mg(2+) as a cofactor.

Its subcellular location is the cytoplasm. It carries out the reaction a 2'-deoxyribonucleoside 5'-diphosphate + ATP = a 2'-deoxyribonucleoside 5'-triphosphate + ADP. The catalysed reaction is a ribonucleoside 5'-diphosphate + ATP = a ribonucleoside 5'-triphosphate + ADP. In terms of biological role, major role in the synthesis of nucleoside triphosphates other than ATP. The ATP gamma phosphate is transferred to the NDP beta phosphate via a ping-pong mechanism, using a phosphorylated active-site intermediate. This chain is Nucleoside diphosphate kinase, found in Hyperthermus butylicus (strain DSM 5456 / JCM 9403 / PLM1-5).